Consider the following 430-residue polypeptide: Trigger factor (430 aa).

The 86-residue stretch at 163-248 (GDTAVFDFAG…LHEVKTKQVP (86 aa)) folds into the PPIase FKBP-type domain.

Belongs to the FKBP-type PPIase family. Tig subfamily.

The protein resides in the cytoplasm. The enzyme catalyses [protein]-peptidylproline (omega=180) = [protein]-peptidylproline (omega=0). Involved in protein export. Acts as a chaperone by maintaining the newly synthesized protein in an open conformation. Functions as a peptidyl-prolyl cis-trans isomerase. This chain is Trigger factor, found in Exiguobacterium sp. (strain ATCC BAA-1283 / AT1b).